Here is a 315-residue protein sequence, read N- to C-terminus: uncharacterized protein (315 aa).

Helical transmembrane passes span 19–39 (IGAGAATIASAGAAIGIGNVF), 56–76 (TVLVVTLTLLGGVAAFYLHSF), and 81–101 (PLKKIIYLFLVFFIAVGISLI). The span at 154 to 171 (EDSASSGRTSSSVNQPIQ) shows a compositional bias: polar residues. Positions 154-214 (EDSASSGRTS…EREARAQEHD (61 aa)) are disordered. Over residues 203–214 (GGEREARAQEHD) the composition is skewed to basic and acidic residues.

Belongs to the ATPase C chain family.

Its subcellular location is the mitochondrion membrane. This is an uncharacterized protein from Arabidopsis thaliana (Mouse-ear cress).